The chain runs to 306 residues: Agmatinase (306 aa).

Residues H126, D149, H151, D153, D230, and D232 each coordinate Mn(2+).

This sequence belongs to the arginase family. Agmatinase subfamily. Mn(2+) serves as cofactor.

It carries out the reaction agmatine + H2O = urea + putrescine. The protein operates within amine and polyamine biosynthesis; putrescine biosynthesis via agmatine pathway; putrescine from agmatine: step 1/1. In terms of biological role, catalyzes the formation of putrescine from agmatine. This Escherichia coli (strain SE11) protein is Agmatinase.